The chain runs to 140 residues: Pro-vaccinia growth factor (140 aa).

An N-terminal signal peptide occupies residues 1-18 (MLINYLMLLFAAMIIRSF). Residues 19–100 (ADSGNAIETT…SEKPNTTTSY (82 aa)) lie on the Extracellular side of the membrane. N-linked (GlcNAc...) asparagine; by host glycosylation occurs at asparagine 34. In terms of domain architecture, EGF-like spans 41-81 (AIRLCGPEGDGYCLHGDCIHARDIDGMYCRCSHGYTGIRCQ). Cystine bridges form between cysteine 45–cysteine 58, cysteine 53–cysteine 69, and cysteine 71–cysteine 80. N-linked (GlcNAc...) asparagine; by host glycosylation occurs at asparagine 95. A helical membrane pass occupies residues 101–121 (IPSPGIMLVLVGIIIITCCLL). At 122-140 (SVYRFTRRTKLPLQDMVVP) the chain is on the cytoplasmic side.

It belongs to the orthopoxvirus OPG019 family. In terms of assembly, vaccinia growth factor interacts with host EGFR and promotes EGFR dimerization.

It localises to the host membrane. Its subcellular location is the secreted. Functionally, stimulates cellular proliferation (hyperplasia)and mobility around infected cells to promote rapid and efficient spread of infection. This effect is beneficial for virus replication in vivo, because poxviruses replicate possibly better in proliferating cells than in quiescent cells. Acts by binding host EGFR, inducing its dimerization, autophosphorylation and leading to activation of several cellular pathways regulating cell proliferation or cell survival. The activation by host EGFR of mitogen activated protein kinases (MAPK) and extracellular-signal regulated kinases (ERK) are essential for the positive effect of vaccinia growth factor on poxvirus virulence in vivo. The chain is Pro-vaccinia growth factor (OPG019) from Homo sapiens (Human).